The primary structure comprises 207 residues: LexA repressor (207 aa).

A DNA-binding region (H-T-H motif) is located at residues 29 to 49 (VREICSAVDLSSTSTVHGHLA). Residues S128 and K166 each act as for autocatalytic cleavage activity in the active site.

This sequence belongs to the peptidase S24 family. In terms of assembly, homodimer.

It carries out the reaction Hydrolysis of Ala-|-Gly bond in repressor LexA.. Functionally, represses a number of genes involved in the response to DNA damage (SOS response), including recA and lexA. In the presence of single-stranded DNA, RecA interacts with LexA causing an autocatalytic cleavage which disrupts the DNA-binding part of LexA, leading to derepression of the SOS regulon and eventually DNA repair. The protein is LexA repressor of Lactobacillus gasseri (strain ATCC 33323 / DSM 20243 / BCRC 14619 / CIP 102991 / JCM 1131 / KCTC 3163 / NCIMB 11718 / NCTC 13722 / AM63).